The primary structure comprises 478 residues: tRNA (guanine-N(7)-)-methyltransferase non-catalytic subunit TRM82 (478 aa).

WD repeat units follow at residues 14–53 (SSADGAAWTLFGASGSKIVVQSSNGVASVWSRQAVQVLDP), 73–113 (EQKF…GLQQ), 217–258 (GHVS…HIIE), and 263–301 (GHEEFVSRLCVTRSGLLVSGGGDAHLLVWDWRNFLLNEK).

The protein belongs to the WD repeat TRM82 family. Forms a heterodimer with the catalytic subunit TRM8.

The protein localises to the nucleus. The protein operates within tRNA modification; N(7)-methylguanine-tRNA biosynthesis. Its function is as follows. Required for the formation of N(7)-methylguanine at position 46 (m7G46) in tRNA. In the complex, it is required to stabilize and induce conformational changes of the catalytic subunit. This is tRNA (guanine-N(7)-)-methyltransferase non-catalytic subunit TRM82 from Phaeosphaeria nodorum (strain SN15 / ATCC MYA-4574 / FGSC 10173) (Glume blotch fungus).